Here is a 192-residue protein sequence, read N- to C-terminus: Peptidyl-tRNA hydrolase (192 aa).

Y14 contributes to the tRNA binding site. H19 acts as the Proton acceptor in catalysis. 2 residues coordinate tRNA: Y66 and N68.

This sequence belongs to the PTH family. In terms of assembly, monomer.

It is found in the cytoplasm. It carries out the reaction an N-acyl-L-alpha-aminoacyl-tRNA + H2O = an N-acyl-L-amino acid + a tRNA + H(+). In terms of biological role, hydrolyzes ribosome-free peptidyl-tRNAs (with 1 or more amino acids incorporated), which drop off the ribosome during protein synthesis, or as a result of ribosome stalling. Functionally, catalyzes the release of premature peptidyl moieties from peptidyl-tRNA molecules trapped in stalled 50S ribosomal subunits, and thus maintains levels of free tRNAs and 50S ribosomes. This Coprothermobacter proteolyticus (strain ATCC 35245 / DSM 5265 / OCM 4 / BT) protein is Peptidyl-tRNA hydrolase.